A 264-amino-acid chain; its full sequence is MSTLQEEIFNSIKEMKSKSPLVHNITNFVVMQITANALLAVGASPVMTFEKEEFEDMLSIASSLVVNIGTLTKTSIEAMHKACETANKKNVPFVLDPVGAGATKLRTKTAIDLIKNYNPKVVRGNASEIMVLAGESIKTKGVDSTANVNMALEAGKHLAKEYNTVVSISGETDIITDGNKVLYVSGGSPLMPVNTGMGCTSTAITGAMLAVSNPLIAAASAMCIMASAGEKASKKSEGPASFAVAFIDELYKLDINDAANRVKE.

Residue Met-47 participates in substrate binding. Positions 123 and 169 each coordinate ATP. Gly-196 lines the substrate pocket.

Belongs to the Thz kinase family. Mg(2+) is required as a cofactor.

The enzyme catalyses 5-(2-hydroxyethyl)-4-methylthiazole + ATP = 4-methyl-5-(2-phosphooxyethyl)-thiazole + ADP + H(+). It functions in the pathway cofactor biosynthesis; thiamine diphosphate biosynthesis; 4-methyl-5-(2-phosphoethyl)-thiazole from 5-(2-hydroxyethyl)-4-methylthiazole: step 1/1. Catalyzes the phosphorylation of the hydroxyl group of 4-methyl-5-beta-hydroxyethylthiazole (THZ). The sequence is that of Hydroxyethylthiazole kinase from Brachyspira hyodysenteriae (strain ATCC 49526 / WA1).